The primary structure comprises 456 residues: Bifunctional protein GlmU (456 aa).

Residues 1–229 (MYNCAIILAA…FEETMGVNSR (229 aa)) form a pyrophosphorylase region. Residues 8–11 (LAAG), Lys-22, Gln-73, and 78–79 (GT) each bind UDP-N-acetyl-alpha-D-glucosamine. Asp-103 is a binding site for Mg(2+). Positions 140, 155, 170, and 227 each coordinate UDP-N-acetyl-alpha-D-glucosamine. Residue Asn-227 coordinates Mg(2+). The tract at residues 230–250 (VQLAEAEKIMRNRINKIHMEN) is linker. Positions 251–456 (GVTLIDHNNT…SWVYKKGLKK (206 aa)) are N-acetyltransferase. Arg-332 and Lys-350 together coordinate UDP-N-acetyl-alpha-D-glucosamine. The Proton acceptor role is filled by His-362. Positions 365 and 376 each coordinate UDP-N-acetyl-alpha-D-glucosamine. Residues 385 to 386 (NY), Ala-422, and Arg-439 each bind acetyl-CoA.

The protein in the N-terminal section; belongs to the N-acetylglucosamine-1-phosphate uridyltransferase family. It in the C-terminal section; belongs to the transferase hexapeptide repeat family. In terms of assembly, homotrimer. Mg(2+) serves as cofactor.

It localises to the cytoplasm. The enzyme catalyses alpha-D-glucosamine 1-phosphate + acetyl-CoA = N-acetyl-alpha-D-glucosamine 1-phosphate + CoA + H(+). It carries out the reaction N-acetyl-alpha-D-glucosamine 1-phosphate + UTP + H(+) = UDP-N-acetyl-alpha-D-glucosamine + diphosphate. It functions in the pathway nucleotide-sugar biosynthesis; UDP-N-acetyl-alpha-D-glucosamine biosynthesis; N-acetyl-alpha-D-glucosamine 1-phosphate from alpha-D-glucosamine 6-phosphate (route II): step 2/2. It participates in nucleotide-sugar biosynthesis; UDP-N-acetyl-alpha-D-glucosamine biosynthesis; UDP-N-acetyl-alpha-D-glucosamine from N-acetyl-alpha-D-glucosamine 1-phosphate: step 1/1. The protein operates within bacterial outer membrane biogenesis; LPS lipid A biosynthesis. In terms of biological role, catalyzes the last two sequential reactions in the de novo biosynthetic pathway for UDP-N-acetylglucosamine (UDP-GlcNAc). The C-terminal domain catalyzes the transfer of acetyl group from acetyl coenzyme A to glucosamine-1-phosphate (GlcN-1-P) to produce N-acetylglucosamine-1-phosphate (GlcNAc-1-P), which is converted into UDP-GlcNAc by the transfer of uridine 5-monophosphate (from uridine 5-triphosphate), a reaction catalyzed by the N-terminal domain. This is Bifunctional protein GlmU from Clostridium kluyveri (strain NBRC 12016).